A 365-amino-acid chain; its full sequence is Endophilin-B1 (365 aa).

M1 is modified (N-acetylmethionine). Residues 1–30 (MNIMDFNVKKLAADAGTFLSRAVQFTEEKL) are membrane-binding amphipathic helix. The segment at 1–37 (MNIMDFNVKKLAADAGTFLSRAVQFTEEKLGQAEKTE) is required for membrane binding. Residues 27–261 (EEKLGQAEKT…LGSFPSNYVS (235 aa)) enclose the BAR domain. A Phosphothreonine; by CDK5 modification is found at T145. Positions 156–185 (KTIAKERKLLQNKRLDLDAAKTRLKKAKAA) form a coiled coil. Residues 305-365 (SSTRKARVLY…VPITYLELLN (61 aa)) enclose the SH3 domain.

The protein belongs to the endophilin family. In terms of assembly, homodimer, and heterodimer with SH3GLB2. Binds BAX; induction of apoptosis augments BAX binding. Binds DNM1, HTT, AMPH, BIN1 and ARFGAP1. Interacts with UVRAG; UVRAG bridges the interaction to BECN1 indicative for an association with the PI3K complex II (PI3KC3-C2). Phosphorylated at Thr-145 by CDK5; this phosphorylation is required for autophagy induction in starved neurons and facilitates homodimerization. In terms of tissue distribution, expressed in brain, heart, lung and spleen. Low level in liver and testis.

The protein localises to the cytoplasm. It localises to the golgi apparatus membrane. It is found in the mitochondrion outer membrane. The protein resides in the cytoplasmic vesicle. Its subcellular location is the autophagosome membrane. The protein localises to the midbody. May be required for normal outer mitochondrial membrane dynamics. Required for coatomer-mediated retrograde transport in certain cells. May recruit other proteins to membranes with high curvature. May promote membrane fusion. Involved in activation of caspase-dependent apoptosis by promoting BAX/BAK1 activation. Involved in caspase-independent apoptosis during nutrition starvation and involved in the regulation of autophagy. Activates lipid kinase activity of PIK3C3 during autophagy probably by associating with the PI3K complex II (PI3KC3-C2). Associated with PI3KC3-C2 during autophagy may regulate the trafficking of ATG9A from the Golgi complex to the peripheral cytoplasm for the formation of autophagosomes by inducing Golgi membrane tubulation and fragmentation. Involved in regulation of degradative endocytic trafficking and cytokinesis, probably in the context of PI3KC3-C2. The chain is Endophilin-B1 from Rattus norvegicus (Rat).